The chain runs to 188 residues: Elongation factor P (188 aa).

Belongs to the elongation factor P family.

It localises to the cytoplasm. It functions in the pathway protein biosynthesis; polypeptide chain elongation. In terms of biological role, involved in peptide bond synthesis. Stimulates efficient translation and peptide-bond synthesis on native or reconstituted 70S ribosomes in vitro. Probably functions indirectly by altering the affinity of the ribosome for aminoacyl-tRNA, thus increasing their reactivity as acceptors for peptidyl transferase. The chain is Elongation factor P from Paramagnetospirillum magneticum (strain ATCC 700264 / AMB-1) (Magnetospirillum magneticum).